The sequence spans 284 residues: 4-diphosphocytidyl-2-C-methyl-D-erythritol kinase (284 aa).

Lys-14 is a catalytic residue. 98-108 lines the ATP pocket; that stretch reads PMGGGLGGGSS. Asp-140 is a catalytic residue.

Belongs to the GHMP kinase family. IspE subfamily.

The enzyme catalyses 4-CDP-2-C-methyl-D-erythritol + ATP = 4-CDP-2-C-methyl-D-erythritol 2-phosphate + ADP + H(+). It functions in the pathway isoprenoid biosynthesis; isopentenyl diphosphate biosynthesis via DXP pathway; isopentenyl diphosphate from 1-deoxy-D-xylulose 5-phosphate: step 3/6. Functionally, catalyzes the phosphorylation of the position 2 hydroxy group of 4-diphosphocytidyl-2C-methyl-D-erythritol. The protein is 4-diphosphocytidyl-2-C-methyl-D-erythritol kinase of Shewanella baltica (strain OS223).